The primary structure comprises 855 residues: Protein translocase subunit SecA (855 aa).

ATP contacts are provided by residues Q88, 106–110 (GEGKT), and D509. Positions 815 to 837 (EANLQNKFEKKPARNEPCPCGSG) are disordered. Zn(2+) contacts are provided by C832, C834, C843, and C844.

This sequence belongs to the SecA family. As to quaternary structure, monomer and homodimer. Part of the essential Sec protein translocation apparatus which comprises SecA, SecYEG and auxiliary proteins SecDF-YajC and YidC. The cofactor is Zn(2+).

The protein resides in the cell inner membrane. It localises to the cytoplasm. The catalysed reaction is ATP + H2O + cellular proteinSide 1 = ADP + phosphate + cellular proteinSide 2.. In terms of biological role, part of the Sec protein translocase complex. Interacts with the SecYEG preprotein conducting channel. Has a central role in coupling the hydrolysis of ATP to the transfer of proteins into and across the cell membrane, serving as an ATP-driven molecular motor driving the stepwise translocation of polypeptide chains across the membrane. The protein is Protein translocase subunit SecA of Campylobacter fetus subsp. fetus (strain 82-40).